The following is a 52-amino-acid chain: MKVKIGLKCSDCEDINYSTTKNAKTNTEKLELKKFCPRENKHTLHKEIKLKS.

This sequence belongs to the bacterial ribosomal protein bL33 family.

The polypeptide is Large ribosomal subunit protein bL33 (Helicobacter pylori (strain HPAG1)).